A 650-amino-acid polypeptide reads, in one-letter code: Aminopeptidase B (650 aa).

Residue serine 7 is modified to Phosphoserine. 298–302 (GGMEN) is a binding site for substrate. Histidine 325 contacts Zn(2+). Glutamate 326 acts as the Proton acceptor in catalysis. Histidine 329 and glutamate 348 together coordinate Zn(2+). The residue at position 446 (lysine 446) is an N6-acetyllysine.

Belongs to the peptidase M1 family. As to quaternary structure, monomer. Zn(2+) serves as cofactor. Widely expressed.

The protein localises to the secreted. It catalyses the reaction Release of N-terminal Arg and Lys from oligopeptides when P1' is not Pro. Also acts on arylamides of Arg and Lys.. Its function is as follows. Exopeptidase which selectively removes arginine and/or lysine residues from the N-terminus of several peptide substrates including Arg(0)-Leu-enkephalin, Arg(0)-Met-enkephalin and Arg(-1)-Lys(0)-somatostatin-14. Can hydrolyze leukotriene A4 (LTA-4) into leukotriene B4 (LTB-4). This chain is Aminopeptidase B (Rnpep), found in Rattus norvegicus (Rat).